We begin with the raw amino-acid sequence, 470 residues long: Histidine--tRNA ligase (470 aa).

This sequence belongs to the class-II aminoacyl-tRNA synthetase family. As to quaternary structure, homodimer.

The protein localises to the cytoplasm. It carries out the reaction tRNA(His) + L-histidine + ATP = L-histidyl-tRNA(His) + AMP + diphosphate + H(+). This chain is Histidine--tRNA ligase, found in Xanthomonas oryzae pv. oryzae (strain PXO99A).